Here is a 148-residue protein sequence, read N- to C-terminus: EKC/KEOPS complex subunit Lage3 (148 aa).

A disordered region spans residues 1–21 (MQTAHTGLSHTADGADGQTSR).

Belongs to the CTAG/PCC1 family. In terms of assembly, component of the EKC/KEOPS complex composed of at least GON7, TP53RK, TPRKB, OSGEP and LAGE3; the whole complex dimerizes.

It is found in the cytoplasm. The protein resides in the nucleus. In terms of biological role, component of the EKC/KEOPS complex that is required for the formation of a threonylcarbamoyl group on adenosine at position 37 (t(6)A37) in tRNAs that read codons beginning with adenine. The complex is probably involved in the transfer of the threonylcarbamoyl moiety of threonylcarbamoyl-AMP (TC-AMP) to the N6 group of A37. LAGE3 functions as a dimerization module for the complex. This chain is EKC/KEOPS complex subunit Lage3, found in Mus musculus (Mouse).